Here is a 142-residue protein sequence, read N- to C-terminus: Galectin-10 (142 aa).

Ser2 bears the N-acetylserine mark. A Galectin domain is found at 6–138 (VPYTEAASLS…DISLTKFNVS (133 aa)).

As to quaternary structure, interacts with CEL. Expressed abundantly in the bone marrow. Expressed exclusively by eosinophils and basophils. Not detected in monocytes and neutrophils. Expressed in CD25-positive regulatory T-cells (Treg) (at protein level). Found in intestinal tissue from patients with Celiac disease, expression is directly related to the histological grade of mucosal damage and to the number of eosinophils found in the duodenal lesion (at protein level). Found in sputum of patients with eosinophilic inflammatory diseases such as asthma (at protein level).

It is found in the cytoplasm. Its subcellular location is the cytosol. The protein localises to the cytoplasmic granule. In terms of biological role, regulates immune responses through the recognition of cell-surface glycans. Essential for the anergy and suppressive function of CD25-positive regulatory T-cells (Treg). In Homo sapiens (Human), this protein is Galectin-10 (CLC).